We begin with the raw amino-acid sequence, 131 residues long: Large ribosomal subunit protein bL17 (131 aa).

Belongs to the bacterial ribosomal protein bL17 family. As to quaternary structure, part of the 50S ribosomal subunit. Contacts protein L32.

The protein is Large ribosomal subunit protein bL17 of Cupriavidus necator (strain ATCC 17699 / DSM 428 / KCTC 22496 / NCIMB 10442 / H16 / Stanier 337) (Ralstonia eutropha).